A 468-amino-acid polypeptide reads, in one-letter code: MNKGRVTQIMGPVVDVKFDGGKLPEIYNALTVKQSNENGELNLTFEVALHLGDDTVRTVAMSSTDGLVRGTEVEDTGKAISVPVGDATLGRVFNVLGDAIDLDGEVPADVRRDPIHRQAPAFEELSTKVEILETGIKVVDLLAPYIKGGKIGLFGGAGVGKTVLIQELINNIAQEHGGISVFAGVGERTREGNDLYHEMSDSGVIKKTAMVFGQMNEPPGARQRVALTGLTMAEYFRDEQGQDVLLFIDNIFRFTQAGSEVSALLGRMPSAVGYQPTLATEMGQLQERITSTNKGSITSIQAVYVPADDYTDPAPATTFAHLDATTNLERRLTQMGIYPAVDPLASTSRALSPEIVGEEHYEVARQVQQTLQRYKELQDIIAILGMDELSEEDKLVVHRARRIQFFLSQNFHVAEQFTGQKGSYVPVKDTVRGFKEILEGKYDDLPEDAFRLVGGIEEVIENAKKMMA.

155–162 lines the ATP pocket; that stretch reads GGAGVGKT.

The protein belongs to the ATPase alpha/beta chains family. As to quaternary structure, F-type ATPases have 2 components, CF(1) - the catalytic core - and CF(0) - the membrane proton channel. CF(1) has five subunits: alpha(3), beta(3), gamma(1), delta(1), epsilon(1). CF(0) has three main subunits: a(1), b(2) and c(9-12). The alpha and beta chains form an alternating ring which encloses part of the gamma chain. CF(1) is attached to CF(0) by a central stalk formed by the gamma and epsilon chains, while a peripheral stalk is formed by the delta and b chains.

It is found in the cell membrane. The enzyme catalyses ATP + H2O + 4 H(+)(in) = ADP + phosphate + 5 H(+)(out). Functionally, produces ATP from ADP in the presence of a proton gradient across the membrane. The catalytic sites are hosted primarily by the beta subunits. The protein is ATP synthase subunit beta of Bacillus cereus (strain ATCC 10987 / NRS 248).